Here is a 199-residue protein sequence, read N- to C-terminus: LexA repressor (199 aa).

The segment at residues 28–47 is a DNA-binding region (H-T-H motif); sequence IRDIAKHFKLTPRGAHIHVI. Residues serine 120 and lysine 157 each act as for autocatalytic cleavage activity in the active site.

The protein belongs to the peptidase S24 family. As to quaternary structure, homodimer.

The enzyme catalyses Hydrolysis of Ala-|-Gly bond in repressor LexA.. Represses a number of genes involved in the response to DNA damage (SOS response), including recA and lexA. In the presence of single-stranded DNA, RecA interacts with LexA causing an autocatalytic cleavage which disrupts the DNA-binding part of LexA, leading to derepression of the SOS regulon and eventually DNA repair. This chain is LexA repressor, found in Thermosipho melanesiensis (strain DSM 12029 / CIP 104789 / BI429).